The chain runs to 94 residues: Small ribosomal subunit protein uS19 (94 aa).

The protein belongs to the universal ribosomal protein uS19 family.

Protein S19 forms a complex with S13 that binds strongly to the 16S ribosomal RNA. This Acetivibrio thermocellus (strain ATCC 27405 / DSM 1237 / JCM 9322 / NBRC 103400 / NCIMB 10682 / NRRL B-4536 / VPI 7372) (Clostridium thermocellum) protein is Small ribosomal subunit protein uS19.